The sequence spans 325 residues: DNA-directed RNA polymerase subunit alpha (325 aa).

The segment at Met-1–Glu-238 is alpha N-terminal domain (alpha-NTD). The segment at Lys-254 to Phe-325 is alpha C-terminal domain (alpha-CTD).

The protein belongs to the RNA polymerase alpha chain family. As to quaternary structure, homodimer. The RNAP catalytic core consists of 2 alpha, 1 beta, 1 beta' and 1 omega subunit. When a sigma factor is associated with the core the holoenzyme is formed, which can initiate transcription.

It carries out the reaction RNA(n) + a ribonucleoside 5'-triphosphate = RNA(n+1) + diphosphate. Its function is as follows. DNA-dependent RNA polymerase catalyzes the transcription of DNA into RNA using the four ribonucleoside triphosphates as substrates. This chain is DNA-directed RNA polymerase subunit alpha, found in Leptospira borgpetersenii serovar Hardjo-bovis (strain JB197).